We begin with the raw amino-acid sequence, 133 residues long: Small ribosomal subunit protein uS19 (133 aa).

Belongs to the universal ribosomal protein uS19 family.

In terms of biological role, protein S19 forms a complex with S13 that binds strongly to the 16S ribosomal RNA. The sequence is that of Small ribosomal subunit protein uS19 from Thermococcus sibiricus (strain DSM 12597 / MM 739).